We begin with the raw amino-acid sequence, 270 residues long: Regulatory protein RecX (270 aa).

It belongs to the RecX family.

It is found in the cytoplasm. Modulates RecA activity. This Bacillus thuringiensis subsp. konkukian (strain 97-27) protein is Regulatory protein RecX.